The chain runs to 68 residues: DNA gyrase inhibitor YacG (68 aa).

Cysteine 14, cysteine 17, cysteine 29, and cysteine 33 together coordinate Zn(2+).

It belongs to the DNA gyrase inhibitor YacG family. In terms of assembly, interacts with GyrB. Zn(2+) is required as a cofactor.

In terms of biological role, inhibits all the catalytic activities of DNA gyrase by preventing its interaction with DNA. Acts by binding directly to the C-terminal domain of GyrB, which probably disrupts DNA binding by the gyrase. The chain is DNA gyrase inhibitor YacG from Azorhizobium caulinodans (strain ATCC 43989 / DSM 5975 / JCM 20966 / LMG 6465 / NBRC 14845 / NCIMB 13405 / ORS 571).